The following is a 126-amino-acid chain: NADH-quinone oxidoreductase subunit A (126 aa).

The next 3 membrane-spanning stretches (helical) occupy residues 11 to 31 (IAIQ…SSWL), 64 to 84 (FLVA…YPWA), and 98 to 118 (EGFV…IYVI).

Belongs to the complex I subunit 3 family. NDH-1 is composed of 14 different subunits. Subunits NuoA, H, J, K, L, M, N constitute the membrane sector of the complex.

It localises to the cell inner membrane. The enzyme catalyses a quinone + NADH + 5 H(+)(in) = a quinol + NAD(+) + 4 H(+)(out). In terms of biological role, NDH-1 shuttles electrons from NADH, via FMN and iron-sulfur (Fe-S) centers, to quinones in the respiratory chain. The immediate electron acceptor for the enzyme in this species is believed to be a menaquinone. Couples the redox reaction to proton translocation (for every two electrons transferred, four hydrogen ions are translocated across the cytoplasmic membrane), and thus conserves the redox energy in a proton gradient. The sequence is that of NADH-quinone oxidoreductase subunit A from Cytophaga hutchinsonii (strain ATCC 33406 / DSM 1761 / CIP 103989 / NBRC 15051 / NCIMB 9469 / D465).